Reading from the N-terminus, the 901-residue chain is HTH-type transcriptional regulator MalT (901 aa).

ATP is bound at residue 39–46 (SPAGYGKT). In terms of domain architecture, HTH luxR-type spans 829–894 (ELIRTSPLTQ…AAVQHAQKLL (66 aa)). Positions 853–872 (NEQIAGELEVAATTIKTHIR) form a DNA-binding region, H-T-H motif.

This sequence belongs to the MalT family. In terms of assembly, monomer in solution. Oligomerizes to an active state in the presence of the positive effectors ATP and maltotriose.

Activated by ATP and maltotriose, which are both required for DNA binding. Functionally, positively regulates the transcription of the maltose regulon whose gene products are responsible for uptake and catabolism of malto-oligosaccharides. Specifically binds to the promoter region of its target genes, recognizing a short DNA motif called the MalT box. The sequence is that of HTH-type transcriptional regulator MalT from Escherichia coli O45:K1 (strain S88 / ExPEC).